Reading from the N-terminus, the 188-residue chain is Phospholipase A2 inhibitor 31 kDa subunit (188 aa).

8 disulfide bridges follow: C3/C27, C6/C13, C20/C48, C54/C75, C76/C81, C99/C124, C117/C146, and C150/C172. A glycan (N-linked (GlcNAc...) asparagine) is linked at N157.

The protein belongs to the CNF-like-inhibitor family. As to quaternary structure, heterodimer with phospholipase A2 inhibitor 25 kDa. N-glycosylated. In terms of tissue distribution, expressed by the liver.

It localises to the secreted. Inhibits the enzymatic activity of phospholipase A2. The chain is Phospholipase A2 inhibitor 31 kDa subunit from Naja kaouthia (Monocled cobra).